The sequence spans 671 residues: K(+)-insensitive pyrophosphate-energized proton pump (671 aa).

5 helical membrane-spanning segments follow: residues 4–24 (LIFT…FFAK), 57–77 (TIAV…DEGL), 79–99 (IAAG…IGMS), 128–148 (AVTG…LYIL), and 156–176 (VGFG…GGIF). Position 178 (Lys178) interacts with substrate. Mg(2+)-binding residues include Asp181, Asp185, Asn208, and Asp211. Transmembrane regions (helical) follow at residues 223–243 (LFET…LIIG), 249–269 (VLYP…SVFF), 285–305 (GVGG…GFLM), 310–330 (FFYV…VTEY), 365–385 (TLVP…IVGG), and 393–413 (LYGI…IVAL). A Mg(2+)-binding site is contributed by Asp421. 4 helical membrane-spanning segments follow: residues 452-472 (AVTK…LFAD), 490-510 (VVLS…AVMM), 558-578 (MAMP…FLGP), and 579-599 (EALA…ALMM). Residues Asp607, Asp633, and Asp637 each coordinate Ca(2+). Substrate is bound at residue Lys640. The helical transmembrane segment at 650-670 (LIKVVNMVAILFSPLIIGGGF) threads the bilayer.

Belongs to the H(+)-translocating pyrophosphatase (TC 3.A.10) family. K(+)-insensitive subfamily. As to quaternary structure, homodimer. The cofactor is Mg(2+).

The protein resides in the cell membrane. It carries out the reaction diphosphate + H2O + H(+)(in) = 2 phosphate + 2 H(+)(out). Proton pump that utilizes the energy of pyrophosphate hydrolysis as the driving force for proton movement across the membrane. Generates a proton motive force. The sequence is that of K(+)-insensitive pyrophosphate-energized proton pump from Methanosarcina mazei (strain ATCC BAA-159 / DSM 3647 / Goe1 / Go1 / JCM 11833 / OCM 88) (Methanosarcina frisia).